The sequence spans 457 residues: UDP-N-acetylmuramoyl-tripeptide--D-alanyl-D-alanine ligase (457 aa).

109–115 is an ATP binding site; the sequence is GSSGKTT.

It belongs to the MurCDEF family. MurF subfamily.

It is found in the cytoplasm. The enzyme catalyses D-alanyl-D-alanine + UDP-N-acetyl-alpha-D-muramoyl-L-alanyl-gamma-D-glutamyl-meso-2,6-diaminopimelate + ATP = UDP-N-acetyl-alpha-D-muramoyl-L-alanyl-gamma-D-glutamyl-meso-2,6-diaminopimeloyl-D-alanyl-D-alanine + ADP + phosphate + H(+). Its pathway is cell wall biogenesis; peptidoglycan biosynthesis. Functionally, involved in cell wall formation. Catalyzes the final step in the synthesis of UDP-N-acetylmuramoyl-pentapeptide, the precursor of murein. The sequence is that of UDP-N-acetylmuramoyl-tripeptide--D-alanyl-D-alanine ligase from Haemophilus influenzae (strain ATCC 51907 / DSM 11121 / KW20 / Rd).